The chain runs to 209 residues: Aspartate kinase-like protein lolA1 (209 aa).

Basic and acidic residues predominate over residues 1-11 (MLDESPMRKGD). The disordered stretch occupies residues 1 to 27 (MLDESPMRKGDSVSNDQSNPESNASVS). Over residues 12–27 (SVSNDQSNPESNASVS) the composition is skewed to polar residues.

Belongs to the aspartokinase family.

It functions in the pathway alkaloid biosynthesis. Its function is as follows. Aspartokinase-like protein; part of the gene cluster that mediates the biosynthesis of loline alkaloids, potent insecticidal agents composed of a pyrrolizidine ring system and an uncommon ether bridge linking carbons 2 and 7. Lolines are structurally differentiated by the various modifications of the L-amino group and include norloline, loline, N-methylloline, N-acetylloline, N-acetylnorloline, and N-formylloline. The first committed step is the condensation of O-acetyl-L-homoserine (derived from L-aspartic acid) and L-proline, probably catalyzed by the gamma-type pyridoxal 5'-phosphate(PLP)-dependent enzyme lolC, to give the diamino diacid, NACPP. Ensuing cyclization, decarboxylation, and acetylation steps yield 1-exo-acetamidopyrrolizidine (AcAP). LolO is required for installation of the ether bridge upon the pathway intermediate, 1-exo-acetamidopyrrolizidine (AcAP). In sequential 2-oxoglutarate- and O(2)-consuming steps, lolO removes hydrogens from C2 and C7 of AcAP to form both carbon-oxygen bonds in N-acetylnorloline (NANL), the precursor to all other lolines. The enzymes lolD, lolE, lolF and lolT have also been proposed to be involved in the ether-bridge installation. Further processing of the exocyclic moiety of NANL by fungal N-acetamidase (LolN), methyltransferase (LolM), and cytochrome P450 (LolP) enzymes, with occasional involvement of a plant acetyltransferase, generates the other known lolines. LolN transforms NANL to norlonine which is monomethylated and dimethylated to respectively lonine and N-methyllonine (NML) by lolM. LolP catalyzes hydroxylation of the methyl group in N-methylloline (NML) and further oxygenation to N-formylloline (NFL). A plant acetyltransferase is responsible for the acetylation of loline to form N-acetylloline (NAL). LolA might interact with aspartate kinase to prevent feedback inhibition of its activity by these end products and thereby promote production of L-homoserine from L-aspartate. The chain is Aspartate kinase-like protein lolA1 from Epichloe uncinata (Endophyte fungus).